We begin with the raw amino-acid sequence, 190 residues long: Holliday junction branch migration complex subunit RuvA (190 aa).

Positions 1 to 64 (MIGKLTGTLL…EDAQLLYGFG (64 aa)) are domain I. Positions 65 to 137 (TAQERQAFRE…LKGKLGADVG (73 aa)) are domain II. The flexible linker stretch occupies residues 137-141 (GVRAH). Residues 142–190 (AANDNQADILQALLALGYNDKEAAAALKALPADVGVSEGIKLALKSLSK) are domain III.

Belongs to the RuvA family. As to quaternary structure, homotetramer. Forms an RuvA(8)-RuvB(12)-Holliday junction (HJ) complex. HJ DNA is sandwiched between 2 RuvA tetramers; dsDNA enters through RuvA and exits via RuvB. An RuvB hexamer assembles on each DNA strand where it exits the tetramer. Each RuvB hexamer is contacted by two RuvA subunits (via domain III) on 2 adjacent RuvB subunits; this complex drives branch migration. In the full resolvosome a probable DNA-RuvA(4)-RuvB(12)-RuvC(2) complex forms which resolves the HJ.

The protein localises to the cytoplasm. The RuvA-RuvB-RuvC complex processes Holliday junction (HJ) DNA during genetic recombination and DNA repair, while the RuvA-RuvB complex plays an important role in the rescue of blocked DNA replication forks via replication fork reversal (RFR). RuvA specifically binds to HJ cruciform DNA, conferring on it an open structure. The RuvB hexamer acts as an ATP-dependent pump, pulling dsDNA into and through the RuvAB complex. HJ branch migration allows RuvC to scan DNA until it finds its consensus sequence, where it cleaves and resolves the cruciform DNA. This is Holliday junction branch migration complex subunit RuvA from Acidovorax ebreus (strain TPSY) (Diaphorobacter sp. (strain TPSY)).